A 466-amino-acid polypeptide reads, in one-letter code: Nitric oxide reductase subunit B (466 aa).

The chain crosses the membrane as a helical span at residues 19-39; the sequence is YFVFALILFVGQILFGLIMGL. His-60 is a heme b binding site. A run of 8 helical transmembrane segments spans residues 61–81, 95–115, 142–162, 169–189, 205–225, 243–263, 270–290, and 308–328; these read TNLLIVWLLFGFMGAAYYLVP, WILFWVFAAAGVLTILGYLLV, ISKAGIVIVALGFLFNVGMTV, AISMVLMTGLIGLALLFLFSF, VVHLWVEGVWELIMGAILAFV, VIIAMALISGIIGTGHHYFWI, LWLGSVFSALEPLPFFAMVLF, and VALWAMGTTVMAFLGAGVWGF. Residues His-207, His-258, and His-259 each coordinate Fe cation. Heme b-binding residues include His-348 and His-350. The next 3 membrane-spanning stretches (helical) occupy residues 349–369, 391–411, and 434–454; these read GHMAFYGAYAMIVMTIISYAM, FWLMTVAMVFITLFLSAAGVL, and LAIFYWLREGAGVVFLIGLVA.

Belongs to the heme-copper respiratory oxidase family. As to quaternary structure, heterodimer of cytochromes b (large subunit) and c (small subunit).

Its subcellular location is the cell membrane. The catalysed reaction is nitrous oxide + 2 Fe(III)-[cytochrome c] + H2O = 2 nitric oxide + 2 Fe(II)-[cytochrome c] + 2 H(+). It functions in the pathway nitrogen metabolism; nitrate reduction (denitrification); dinitrogen from nitrate: step 3/4. In terms of biological role, component of the anaerobic respiratory chain that transforms nitrate to dinitrogen (denitrification). NorB is the catalytic subunit of the enzyme complex. Shows proton pump activity across the membrane in denitrifying bacterial cells. The mononitrogen reduction is probably coupled to electron transport phosphorylation. This chain is Nitric oxide reductase subunit B (norB), found in Pseudomonas aeruginosa (strain ATCC 15692 / DSM 22644 / CIP 104116 / JCM 14847 / LMG 12228 / 1C / PRS 101 / PAO1).